The chain runs to 780 residues: uncharacterized protein (780 aa).

The 71-residue stretch at 10-80 (NNNIIKLNIG…MRTGTFTLPY (71 aa)) folds into the BTB domain.

This is an uncharacterized protein from Dictyostelium discoideum (Social amoeba).